Consider the following 384-residue polypeptide: Calreticulin-3 (384 aa).

Residues 1–19 form the signal peptide; the sequence is MAAARVPLWAICVRRVALA. The interval 20-197 is N-domain; it reads TVYFQEEFLD…GQSIESGSIE (178 aa). Asn42 carries an N-linked (GlcNAc...) asparagine glycan. Cys105 and Cys137 form a disulfide bridge. Residues Tyr109, Lys111, Tyr128, and Asp135 each contribute to the an alpha-D-glucoside site. 7 tandem repeats follow at residues 191–202, 209–220, 222–231, 235–246, 250–260, 264–272, and 274–284. Residues 191–246 form a 4 X approximate repeats region; it reads IESGSIEYDWQLTSLKKMEKASAEAEGWDQAAKDKSQDWEKHFLDASASKPSDWKG. The tract at residues 198–294 is P-domain; it reads YDWQLTSLKK…YLTEYDLSEF (97 aa). A 3 X approximate repeats region spans residues 250–284; the sequence is GDWQAAMLQKPPYQDGLKPEGIDKDVWLHQKMKNS. The segment at 295–384 is C-domain; sequence ENIGAVGLEL…FKGFHRRNEF (90 aa). Glu303 lines the an alpha-D-glucoside pocket. A Prevents secretion from ER motif is present at residues 381–384; the sequence is RNEF.

Belongs to the calreticulin family. Component of an EIF2 complex at least composed of CELF1/CUGBP1, CALR, CALR3, EIF2S1, EIF2S2, HSP90B1 and HSPA5.

Its subcellular location is the endoplasmic reticulum lumen. During spermatogenesis, may act as a lectin-independent chaperone for specific client proteins such as ADAM3. CALR3 capacity for calcium-binding may be absent or much lower than that of CALR. Required for sperm fertility. The sequence is that of Calreticulin-3 (CALR3) from Bos taurus (Bovine).